The chain runs to 101 residues: MIFEHALVLSAYLFSIGIYGLITSRNMVRALMCLELILNAVNINLVTFSDFFDSRQLKGNIFSIFVIAIAAAEAAIGPAIVSSIYRNRKSTRINQSNLLNK.

The next 3 membrane-spanning stretches (helical) occupy residues 2-22 (IFEH…YGLI), 32-52 (MCLE…SDFF), and 61-81 (IFSI…PAIV).

It belongs to the complex I subunit 4L family. NDH is composed of at least 16 different subunits, 5 of which are encoded in the nucleus.

The protein resides in the plastid. Its subcellular location is the chloroplast thylakoid membrane. The catalysed reaction is a plastoquinone + NADH + (n+1) H(+)(in) = a plastoquinol + NAD(+) + n H(+)(out). It carries out the reaction a plastoquinone + NADPH + (n+1) H(+)(in) = a plastoquinol + NADP(+) + n H(+)(out). Functionally, NDH shuttles electrons from NAD(P)H:plastoquinone, via FMN and iron-sulfur (Fe-S) centers, to quinones in the photosynthetic chain and possibly in a chloroplast respiratory chain. The immediate electron acceptor for the enzyme in this species is believed to be plastoquinone. Couples the redox reaction to proton translocation, and thus conserves the redox energy in a proton gradient. In Glycine max (Soybean), this protein is NAD(P)H-quinone oxidoreductase subunit 4L, chloroplastic.